The chain runs to 569 residues: Synaptotagmin-4 (569 aa).

Residues M1 to F21 form a helical membrane-spanning segment. The 185-residue stretch at Q67–L251 folds into the SMP-LTD domain. The segment at E229 to T531 is phospholipid binding. C2 domains are found at residues R245–L366 and T426–F543. 5 residues coordinate Ca(2+): D459, D465, D514, D516, and D521.

The protein belongs to the synaptotagmin family. The cofactor is Ca(2+).

It localises to the membrane. In terms of biological role, may be involved in membrane trafficking. In Arabidopsis thaliana (Mouse-ear cress), this protein is Synaptotagmin-4 (SYT4).